Reading from the N-terminus, the 533-residue chain is Beta-apo-4'-carotenal oxygenase (533 aa).

Residues Glu-226 and Cys-260 contribute to the active site.

It belongs to the aldehyde dehydrogenase family.

The enzyme catalyses 4'-apo-beta-carotenal + NAD(+) + H2O = neurosporaxanthin + NADH + 2 H(+). Functionally, beta-apo-4'-carotenal oxygenase involved in the last step of synthesis of neurosporaxanthin, a carboxylic apocarotenoid acting as an essential protective pigment and leading to orange pigmentation. Converts the aldehyde beta-apo-4'-carotenal into neurosporaxanthin. Neurosporaxanthin is synthesized from geranyl-geranyl pyrophosphate (GGPP) through several enzymatic activities. Phytoene synthase activity performed by the bifunctional enzyme al-2 first produces phytoene from geranyl-geranyl pyrophosphate (GGPP). The phytoene dehydrogenase al-1 then introduces 5 desaturations to lead to 3,4-didehydrolycopene via the intermediates phytofluene, zeta-carotene, neurosporene and lycopene. Al-2 cyclase activity then converts 3,4-didehydrolycopene into torulene. Al-2 can also convet lycopene into gamma-carotene which in turn is converted to beta-carotene by an additional al-2 cyclization reaction. Torulene is the substrate of the dioxidase cao-2 that breaks the molecule, removing five carbon atoms to yield beta-apo-4'-carotenal, whereas the aldehyde dehydrogenase ylo-1 mediates the last step by converting beta-apo-4'-carotenal into neurosporaxanthin. This is Beta-apo-4'-carotenal oxygenase from Neurospora crassa (strain ATCC 24698 / 74-OR23-1A / CBS 708.71 / DSM 1257 / FGSC 987).